The sequence spans 146 residues: 3-dehydroquinate dehydratase (146 aa).

The active-site Proton acceptor is Y24. Substrate contacts are provided by N75, H81, and D88. The active-site Proton donor is H101. Substrate contacts are provided by residues 102–103 (LS) and R112.

Belongs to the type-II 3-dehydroquinase family. Homododecamer.

The enzyme catalyses 3-dehydroquinate = 3-dehydroshikimate + H2O. It functions in the pathway metabolic intermediate biosynthesis; chorismate biosynthesis; chorismate from D-erythrose 4-phosphate and phosphoenolpyruvate: step 3/7. Its function is as follows. Catalyzes a trans-dehydration via an enolate intermediate. The sequence is that of 3-dehydroquinate dehydratase from Caulobacter vibrioides (strain ATCC 19089 / CIP 103742 / CB 15) (Caulobacter crescentus).